We begin with the raw amino-acid sequence, 310 residues long: Olfactory receptor 2A1/2A42 (310 aa).

Over 1-24 (MGENQTMVTEFLLLGFLLGPRIQM) the chain is Extracellular. A glycan (N-linked (GlcNAc...) asparagine) is linked at Asn4. The chain crosses the membrane as a helical span at residues 25-48 (LLFGLFSLFYIFTLLGNGAILGLI). Residues 49–56 (SLDSRLHT) lie on the Cytoplasmic side of the membrane. Residues 57 to 78 (PMYFFLSHLAVVDIAYTRNTVP) form a helical membrane-spanning segment. The Extracellular portion of the chain corresponds to 79 to 99 (QMLANLLHPAKPISFAGCMTQ). Cysteines 96 and 188 form a disulfide. Residues 100–119 (TFLCLSFGHSECLLLVLMSY) form a helical membrane-spanning segment. The Cytoplasmic portion of the chain corresponds to 120–138 (DRYVAICHPLRYSVIMTWR). A helical transmembrane segment spans residues 139–157 (VCITLAVTSWTCGSLLALA). Over 158-195 (HVVLILRLPFSGPHEINHFFCEILSVLRLACADTWLNQ) the chain is Extracellular. Residues 196-218 (VVIFAACVFFLVGPPSLVLVSYS) form a helical membrane-spanning segment. Over 219-235 (HILAAILRIQSGEGRRK) the chain is Cytoplasmic. The helical transmembrane segment at 236–258 (AFSTCSSHLCVVGLFFGSAIIMY) threads the bilayer. The Extracellular portion of the chain corresponds to 259 to 271 (MAPKSRHPEEQQK). A helical membrane pass occupies residues 272 to 291 (VFFLFYSFFNPTLNPLIYSL). The Cytoplasmic portion of the chain corresponds to 292–310 (RNGEVKGALRRALGKESHS).

Belongs to the G-protein coupled receptor 1 family.

The protein resides in the cell membrane. Its function is as follows. Odorant receptor. In Homo sapiens (Human), this protein is Olfactory receptor 2A1/2A42 (OR2A1).